Here is a 361-residue protein sequence, read N- to C-terminus: Phosphoserine aminotransferase (361 aa).

Arg-43 is a binding site for L-glutamate. Residues Ala-77–Ser-78, Trp-103, Thr-153, Asp-173, and Gln-196 contribute to the pyridoxal 5'-phosphate site. Position 197 is an N6-(pyridoxal phosphate)lysine (Lys-197). Position 238-239 (Asn-238–Thr-239) interacts with pyridoxal 5'-phosphate.

It belongs to the class-V pyridoxal-phosphate-dependent aminotransferase family. SerC subfamily. Homodimer. Pyridoxal 5'-phosphate serves as cofactor.

The protein localises to the cytoplasm. The catalysed reaction is O-phospho-L-serine + 2-oxoglutarate = 3-phosphooxypyruvate + L-glutamate. The enzyme catalyses 4-(phosphooxy)-L-threonine + 2-oxoglutarate = (R)-3-hydroxy-2-oxo-4-phosphooxybutanoate + L-glutamate. It participates in amino-acid biosynthesis; L-serine biosynthesis; L-serine from 3-phospho-D-glycerate: step 2/3. Its pathway is cofactor biosynthesis; pyridoxine 5'-phosphate biosynthesis; pyridoxine 5'-phosphate from D-erythrose 4-phosphate: step 3/5. Catalyzes the reversible conversion of 3-phosphohydroxypyruvate to phosphoserine and of 3-hydroxy-2-oxo-4-phosphonooxybutanoate to phosphohydroxythreonine. This Pseudomonas syringae pv. syringae (strain B728a) protein is Phosphoserine aminotransferase.